We begin with the raw amino-acid sequence, 771 residues long: Leucine-rich repeat and fibronectin type III domain-containing protein 1 (771 aa).

The signal sequence occupies residues 1-31 (MAPGPFSSALLSPPPAALPFLLLLWAGASRG). The LRRNT domain occupies 32–65 (QPCPGRCICQNVAPTLTMLCAKTGLLFVPPAIDR). Over 32-536 (QPCPGRCICQ…LRAHFLGGTM (505 aa)) the chain is Extracellular. 7 LRR repeats span residues 66–87 (RVVE…DFAN), 90–111 (SLVH…AFAD), 114–135 (ALRA…QLRG), 138–159 (NLRH…AFDA), 163–184 (TVED…AVGQ), 187–208 (NLNT…TFVQ), and 211–232 (KLVR…GLFL). N87 carries N-linked (GlcNAc...) asparagine glycosylation. In terms of domain architecture, LRRCT spans 252-298 (NPLHCNCELLWLRRLTREDDLETCATPEHLTDRYFWSIPEEEFLCEP). Residues 299–386 (PLITRQAGGR…GEATAPVEVC (88 aa)) enclose the Ig-like domain. A disulfide bridge links C321 with C370. N343 carries N-linked (GlcNAc...) asparagine glycosylation. Residues 397-422 (PAAPPPLTEPGSSDIATPGRPGANDS) form a disordered region. Residues 424 to 520 (AERRLVAAEL…GCVQFTTAGD (97 aa)) enclose the Fibronectin type-III domain. The helical transmembrane segment at 537–557 (IIAIGGVIVASVLVFIVLLMI) threads the bilayer. Topologically, residues 558 to 771 (RYKVYGDGDS…STEWMLESTV (214 aa)) are cytoplasmic. Residues S613 and S718 each carry the phosphoserine modification. The disordered stretch occupies residues 654–743 (PSEETSGEES…HLDGAGGGAA (90 aa)). The segment covering 719–732 (YPRRARRTKRHRST) has biased composition (basic residues). The PDZ-binding signature appears at 768–771 (ESTV).

The protein belongs to the LRFN family. Can form heteromeric complexes with LRFN2, LRFN3, LRFN4 and LRFN5. Forms homomeric complexes, but not across cell junctions. Interacts with DLG1, DLG2, DLG3 and DLG4. Interacts with 2 AMPA receptor subunits GRIA1 and GRIA2 and NMDA receptor subunit GRIN1. Glycosylated.

The protein localises to the membrane. It is found in the synapse. Its subcellular location is the postsynaptic density membrane. Functionally, promotes neurite outgrowth in hippocampal neurons. Involved in the regulation and maintenance of excitatory synapses. Induces the clustering of excitatory postsynaptic proteins, including DLG4, DLGAP1, GRIA1 and GRIN1. In Homo sapiens (Human), this protein is Leucine-rich repeat and fibronectin type III domain-containing protein 1 (LRFN1).